The primary structure comprises 397 residues: 1-deoxy-D-xylulose 5-phosphate reductoisomerase (397 aa).

The NADPH site is built by T12, G13, S14, I15, G38, K39, N40, and N126. K127 is a binding site for 1-deoxy-D-xylulose 5-phosphate. E128 contributes to the NADPH binding site. Position 152 (D152) interacts with Mn(2+). 4 residues coordinate 1-deoxy-D-xylulose 5-phosphate: S153, E154, S188, and H211. Mn(2+) is bound at residue E154. NADPH is bound at residue G217. 1-deoxy-D-xylulose 5-phosphate-binding residues include S224, N229, K230, and E233. E233 serves as a coordination point for Mn(2+).

This sequence belongs to the DXR family. Mg(2+) serves as cofactor. The cofactor is Mn(2+).

The enzyme catalyses 2-C-methyl-D-erythritol 4-phosphate + NADP(+) = 1-deoxy-D-xylulose 5-phosphate + NADPH + H(+). The protein operates within isoprenoid biosynthesis; isopentenyl diphosphate biosynthesis via DXP pathway; isopentenyl diphosphate from 1-deoxy-D-xylulose 5-phosphate: step 1/6. In terms of biological role, catalyzes the NADPH-dependent rearrangement and reduction of 1-deoxy-D-xylulose-5-phosphate (DXP) to 2-C-methyl-D-erythritol 4-phosphate (MEP). This chain is 1-deoxy-D-xylulose 5-phosphate reductoisomerase, found in Haemophilus influenzae (strain 86-028NP).